Here is a 437-residue protein sequence, read N- to C-terminus: Purple acid phosphatase 18 (437 aa).

The signal sequence occupies residues 1–23 (MEKWGILLLVTLSVSIIFTSAAA). 3 residues coordinate Fe cation: aspartate 148, aspartate 175, and tyrosine 178. Aspartate 175 serves as a coordination point for Zn(2+). The Zn(2+) site is built by asparagine 208 and histidine 291. Position 208 (asparagine 208) interacts with substrate. Residue histidine 301 is the Proton donor of the active site. Residue histidine 328 coordinates Zn(2+). 328-330 (HVH) contacts substrate. Residue histidine 330 participates in Fe cation binding. A glycan (N-linked (GlcNAc...) asparagine) is linked at asparagine 390.

It belongs to the metallophosphoesterase superfamily. Purple acid phosphatase family. In terms of assembly, homodimer. The cofactor is Fe cation. It depends on Zn(2+) as a cofactor. In terms of tissue distribution, expressed in roots, stems, leaves, flowers and siliques.

It is found in the secreted. It carries out the reaction a phosphate monoester + H2O = an alcohol + phosphate. The sequence is that of Purple acid phosphatase 18 (PAP18) from Arabidopsis thaliana (Mouse-ear cress).